A 307-amino-acid polypeptide reads, in one-letter code: Murein tetrapeptide carboxypeptidase (307 aa).

Catalysis depends on S115, which acts as the Nucleophile. Catalysis depends on charge relay system residues E217 and H285.

This sequence belongs to the peptidase S66 family. In terms of assembly, homodimer.

The protein localises to the cytoplasm. The catalysed reaction is N-acetyl-D-glucosaminyl-N-acetylmuramoyl-L-alanyl-meso-2,6-diaminoheptanedioyl-D-alanine + H2O = N-acetyl-D-glucosaminyl-N-acetylmuramoyl-L-alanyl-meso-2,6-diaminoheptanedioate + D-alanine. It participates in cell wall biogenesis; peptidoglycan recycling. In terms of biological role, releases the terminal D-alanine residue from the cytoplasmic disaccharide-tetrapeptide GlcNAc-MurNAc-L-Ala-gamma-D-Glu-meso-Dap-D-Ala, which is a murein turnover product. Probably also act on free tetrapetide. May be involved in murein recycling. The polypeptide is Murein tetrapeptide carboxypeptidase (Pseudomonas aeruginosa (strain ATCC 15692 / DSM 22644 / CIP 104116 / JCM 14847 / LMG 12228 / 1C / PRS 101 / PAO1)).